Reading from the N-terminus, the 291-residue chain is Nucleotide-binding protein LGAS_1315 (291 aa).

13–20 (GMSGAGKT) is a binding site for ATP. 63–66 (DLRV) contributes to the GTP binding site.

It belongs to the RapZ-like family.

In terms of biological role, displays ATPase and GTPase activities. In Lactobacillus gasseri (strain ATCC 33323 / DSM 20243 / BCRC 14619 / CIP 102991 / JCM 1131 / KCTC 3163 / NCIMB 11718 / NCTC 13722 / AM63), this protein is Nucleotide-binding protein LGAS_1315.